A 1115-amino-acid chain; its full sequence is Ubiquitin C-terminal hydrolase 13 (1115 aa).

The tract at residues methionine 1–proline 51 is disordered. The 126-residue stretch at serine 53 to valine 178 folds into the MATH domain. The USP domain maps to valine 198–glutamate 522. Cysteine 207 serves as the catalytic Nucleophile. Histidine 454 acts as the Proton acceptor in catalysis.

Belongs to the peptidase C19 family. Interacts with SIC/RON3. Interacts with RGI1 and RGI2.

The catalysed reaction is Thiol-dependent hydrolysis of ester, thioester, amide, peptide and isopeptide bonds formed by the C-terminal Gly of ubiquitin (a 76-residue protein attached to proteins as an intracellular targeting signal).. In terms of biological role, recognizes and hydrolyzes the peptide bond at the C-terminal Gly of ubiquitin. Involved in the processing of poly-ubiquitin precursors as well as that of ubiquitinated proteins. Positive regulator of root meristem development that, together with UBP12, prevents the ubiquitination and turnover of RGFR1 induced by the RGF1 hormone peptide, thus influencing PLT1 and PLT2 expression. The protein is Ubiquitin C-terminal hydrolase 13 of Arabidopsis thaliana (Mouse-ear cress).